We begin with the raw amino-acid sequence, 68 residues long: Preprofallaxidin-5 (68 aa).

The N-terminal stretch at 1–22 (MASLKKSLFLVLFLGFVSLSIC) is a signal peptide. Positions 23-51 (EEEKREDKEDEGENEEAEENHEERSEEKR) are excised as a propeptide. Residues 24-50 (EEKREDKEDEGENEEAEENHEERSEEK) form a disordered region. A compositionally biased stretch (acidic residues) spans 30–42 (KEDEGENEEAEEN). Leu64 is subject to Leucine amide. Ser68 is a propeptide.

This sequence belongs to the frog skin active peptide (FSAP) family. Brevinin subfamily. In terms of tissue distribution, expressed by the skin glands.

The protein localises to the secreted. This Litoria fallax (Eastern dwarf tree frog) protein is Preprofallaxidin-5.